Consider the following 122-residue polypeptide: MKLFIILGALCTMMSVGTGAFGAHGLEGKLSDKYMSVWEKAVNYQMYHGLGLIIIGVISGTTSINVNWAGWLLFLGVVFFSGSLYILALTQIRILGAITPIGGLLFIAGWLMLIISTFKFVG.

Helical transmembrane passes span 3–23 (LFII…AFGA), 46–66 (MYHG…SINV), 69–89 (AGWL…ILAL), and 98–118 (ITPI…ISTF).

The protein belongs to the UPF0382 family.

It is found in the cell membrane. This Staphylococcus haemolyticus (strain JCSC1435) protein is UPF0382 membrane protein SH2409.